We begin with the raw amino-acid sequence, 219 residues long: Large ribosomal subunit protein mL67 (219 aa).

The protein belongs to the mitochondrion-specific ribosomal protein mL67 family.

The protein resides in the nucleus. Its subcellular location is the mitochondrion. Its function is as follows. Transcription factor involved in regulation of RNA polymerase II-dependent transcription. Also involved in regulation of mitochondrial DNA recombination, maintenance and repair, and generation of homoplasmic cells. This Kluyveromyces lactis (strain ATCC 8585 / CBS 2359 / DSM 70799 / NBRC 1267 / NRRL Y-1140 / WM37) (Yeast) protein is Large ribosomal subunit protein mL67 (MHR1).